The sequence spans 885 residues: Leucine--tRNA ligase (885 aa).

Positions 48–58 (PYPSGKLHMGH) match the 'HIGH' region motif. The 'KMSKS' region signature appears at 639–643 (TMSKS). Lysine 642 serves as a coordination point for ATP.

It belongs to the class-I aminoacyl-tRNA synthetase family.

It localises to the cytoplasm. The enzyme catalyses tRNA(Leu) + L-leucine + ATP = L-leucyl-tRNA(Leu) + AMP + diphosphate. This chain is Leucine--tRNA ligase, found in Bordetella bronchiseptica (strain ATCC BAA-588 / NCTC 13252 / RB50) (Alcaligenes bronchisepticus).